The primary structure comprises 501 residues: MSVELWQQCVELLRDELPAQQFNTWIRPLQVEAEGDELRVYAPNRFVLDWVNEKYLSRVLELLDEHGNGLAPVLSLLIGSKRSSAPRAAPNAPLAAAASQAQAAPVASTPAPAPSKSSAKKNAAENEEPSRDSFDPMAGASSQQAPIRAEQRTVQVEGALKHTSYLNRTFTFENFVEGKSNQLARAAAWQVADNPKHGYNPLFLYGGVGLGKTHLMHAVGNHLLKKNPNAKVVYLHSERFVADMVKALQLNAINEFKRFYRSVDALLIDDIQFFARKERSQEEFFHTFNALLEGGQQVILTSDRYPKEIEGLEERLKSRFGWGLTVAVEPPELETRVAILMKKADQAKVDLPHDAAFFIAQRIRSNVRELEGALKRVIAHSHFMGRDITIELIRESLKDLLALQDKLVSVDNIQRTVAEYYKIKISDLLSKRRSRSVARPRQVAMALSKELTNHSLPEIGDVFGGRDHTTVLHACRKINELKESDADIREDYKNLLRTLTT.

The interval 1–90 (MSVELWQQCV…KRSSAPRAAP (90 aa)) is domain I, interacts with DnaA modulators. The interval 91–164 (NAPLAAAASQ…QVEGALKHTS (74 aa)) is domain II. Residues 103–121 (AAPVASTPAPAPSKSSAKK) show a composition bias toward low complexity. The interval 103 to 150 (AAPVASTPAPAPSKSSAKKNAAENEEPSRDSFDPMAGASSQQAPIRAE) is disordered. Positions 122-134 (NAAENEEPSRDSF) are enriched in basic and acidic residues. Residues 165–381 (YLNRTFTFEN…GALKRVIAHS (217 aa)) are domain III, AAA+ region. Residues Gly209, Gly211, Lys212, and Thr213 each coordinate ATP. Residues 382-501 (HFMGRDITIE…YKNLLRTLTT (120 aa)) are domain IV, binds dsDNA.

It belongs to the DnaA family. Oligomerizes as a right-handed, spiral filament on DNA at oriC.

The protein localises to the cytoplasm. Functionally, plays an essential role in the initiation and regulation of chromosomal replication. ATP-DnaA binds to the origin of replication (oriC) to initiate formation of the DNA replication initiation complex once per cell cycle. Binds the DnaA box (a 9 base pair repeat at the origin) and separates the double-stranded (ds)DNA. Forms a right-handed helical filament on oriC DNA; dsDNA binds to the exterior of the filament while single-stranded (ss)DNA is stabiized in the filament's interior. The ATP-DnaA-oriC complex binds and stabilizes one strand of the AT-rich DNA unwinding element (DUE), permitting loading of DNA polymerase. After initiation quickly degrades to an ADP-DnaA complex that is not apt for DNA replication. Binds acidic phospholipids. The sequence is that of Chromosomal replication initiator protein DnaA from Pseudomonas fluorescens (strain SBW25).